The sequence spans 199 residues: MNNIIPTQEEIAARVKALESILIEQNVISTAMVDRMVEIYEEEVGPKLGAKVVAKAWTDSEFKARLLDDATEACKELGISGLQGEDMVVLEDTDDVHHAIVCTLCSCYPWPVLGLPPNWYKEPAYRARIVREPRTVLSEEFNYHLPESTEIRIWDTSSEMRYWVLPQRPEGTEGWSEEQLAELVTRDSMIGVGPVKTPA.

Residues C102, C105, S106, and C107 each contribute to the Fe(3+) site. Cysteine sulfinic acid (-SO2H) is present on C105. At C107 the chain carries Cysteine sulfenic acid (-SOH).

This sequence belongs to the nitrile hydratase subunit alpha family. Heterodimer of an alpha and a beta chain. Requires Fe(3+) as cofactor. Oxidation on Cys-105 is essential for the activity. Post-translationally, oxidation on Cys-107 stabilizes the Fe-NO ligand coordinated in the inactive form.

The enzyme catalyses an aliphatic primary amide = an aliphatic nitrile + H2O. Inactivated by oxidation of Cys-107 to a sulfenic acid. NHase catalyzes the hydration of various nitrile compounds to the corresponding amides. Industrial production of acrylamide is now being developed using some of the enzymes of this class. In Rhodococcus sp, this protein is Nitrile hydratase subunit alpha (nthA).